Here is a 334-residue protein sequence, read N- to C-terminus: Ketol-acid reductoisomerase (NADP(+)) (334 aa).

The region spanning 1–181 (MTTVYYDQDV…GATRAGVIET (181 aa)) is the KARI N-terminal Rossmann domain. Residues 25–28 (YGSQ), Arg-48, Ser-52, and 82–85 (DEIQ) each bind NADP(+). His-107 is an active-site residue. Gly-133 contributes to the NADP(+) binding site. Positions 182 to 327 (TFKEETETDL…RELREMMPFI (146 aa)) constitute a KARI C-terminal knotted domain. Positions 190, 194, 226, and 230 each coordinate Mg(2+). Ser-251 contributes to the substrate binding site.

This sequence belongs to the ketol-acid reductoisomerase family. The cofactor is Mg(2+).

It carries out the reaction (2R)-2,3-dihydroxy-3-methylbutanoate + NADP(+) = (2S)-2-acetolactate + NADPH + H(+). The catalysed reaction is (2R,3R)-2,3-dihydroxy-3-methylpentanoate + NADP(+) = (S)-2-ethyl-2-hydroxy-3-oxobutanoate + NADPH + H(+). It participates in amino-acid biosynthesis; L-isoleucine biosynthesis; L-isoleucine from 2-oxobutanoate: step 2/4. The protein operates within amino-acid biosynthesis; L-valine biosynthesis; L-valine from pyruvate: step 2/4. Functionally, involved in the biosynthesis of branched-chain amino acids (BCAA). Catalyzes an alkyl-migration followed by a ketol-acid reduction of (S)-2-acetolactate (S2AL) to yield (R)-2,3-dihydroxy-isovalerate. In the isomerase reaction, S2AL is rearranged via a Mg-dependent methyl migration to produce 3-hydroxy-3-methyl-2-ketobutyrate (HMKB). In the reductase reaction, this 2-ketoacid undergoes a metal-dependent reduction by NADPH to yield (R)-2,3-dihydroxy-isovalerate. The sequence is that of Ketol-acid reductoisomerase (NADP(+)) from Staphylococcus aureus (strain USA300).